The chain runs to 201 residues: Small ribosomal subunit protein uS4c (201 aa).

Residues 89 to 152 (MRLDNILFRL…NSRTLVQNLL (64 aa)) enclose the S4 RNA-binding domain.

This sequence belongs to the universal ribosomal protein uS4 family. In terms of assembly, part of the 30S ribosomal subunit. Contacts protein S5. The interaction surface between S4 and S5 is involved in control of translational fidelity.

It localises to the plastid. Its subcellular location is the chloroplast. Functionally, one of the primary rRNA binding proteins, it binds directly to 16S rRNA where it nucleates assembly of the body of the 30S subunit. In terms of biological role, with S5 and S12 plays an important role in translational accuracy. This is Small ribosomal subunit protein uS4c (rps4) from Capsella bursa-pastoris (Shepherd's purse).